The following is a 411-amino-acid chain: 2,3-bisphosphoglycerate-independent phosphoglycerate mutase (411 aa).

It belongs to the BPG-independent phosphoglycerate mutase family. A-PGAM subfamily.

The enzyme catalyses (2R)-2-phosphoglycerate = (2R)-3-phosphoglycerate. It functions in the pathway carbohydrate degradation; glycolysis; pyruvate from D-glyceraldehyde 3-phosphate: step 3/5. In terms of biological role, catalyzes the interconversion of 2-phosphoglycerate and 3-phosphoglycerate. In Thermococcus gammatolerans (strain DSM 15229 / JCM 11827 / EJ3), this protein is 2,3-bisphosphoglycerate-independent phosphoglycerate mutase.